We begin with the raw amino-acid sequence, 86 residues long: UPF0297 protein SERP1181 (86 aa).

This sequence belongs to the UPF0297 family.

The polypeptide is UPF0297 protein SERP1181 (Staphylococcus epidermidis (strain ATCC 35984 / DSM 28319 / BCRC 17069 / CCUG 31568 / BM 3577 / RP62A)).